Consider the following 440-residue polypeptide: Xylose isomerase (440 aa).

Active-site residues include histidine 100 and aspartate 103. 7 residues coordinate Mg(2+): glutamate 231, glutamate 267, histidine 270, aspartate 295, aspartate 306, aspartate 308, and aspartate 338.

Belongs to the xylose isomerase family. As to quaternary structure, homotetramer. The cofactor is Mg(2+).

It localises to the cytoplasm. It catalyses the reaction alpha-D-xylose = alpha-D-xylulofuranose. This is Xylose isomerase from Burkholderia vietnamiensis (strain G4 / LMG 22486) (Burkholderia cepacia (strain R1808)).